Here is a 432-residue protein sequence, read N- to C-terminus: Trigger factor (432 aa).

The region spanning 161 to 246 (EDRVTIDFTG…LKKVEERELP (86 aa)) is the PPIase FKBP-type domain.

Belongs to the FKBP-type PPIase family. Tig subfamily.

The protein resides in the cytoplasm. It catalyses the reaction [protein]-peptidylproline (omega=180) = [protein]-peptidylproline (omega=0). In terms of biological role, involved in protein export. Acts as a chaperone by maintaining the newly synthesized protein in an open conformation. Functions as a peptidyl-prolyl cis-trans isomerase. The sequence is that of Trigger factor from Cronobacter sakazakii (strain ATCC BAA-894) (Enterobacter sakazakii).